A 426-amino-acid chain; its full sequence is 3-phosphoshikimate 1-carboxyvinyltransferase (426 aa).

The 3-phosphoshikimate site is built by lysine 22, serine 23, and arginine 27. Position 22 (lysine 22) interacts with phosphoenolpyruvate. Phosphoenolpyruvate-binding residues include glycine 96 and arginine 124. Residues serine 170, serine 171, glutamine 172, serine 198, aspartate 314, asparagine 337, and lysine 341 each coordinate 3-phosphoshikimate. Phosphoenolpyruvate is bound at residue glutamine 172. The Proton acceptor role is filled by aspartate 314. 3 residues coordinate phosphoenolpyruvate: arginine 345, arginine 387, and lysine 412.

This sequence belongs to the EPSP synthase family. In terms of assembly, monomer.

The protein localises to the cytoplasm. It catalyses the reaction 3-phosphoshikimate + phosphoenolpyruvate = 5-O-(1-carboxyvinyl)-3-phosphoshikimate + phosphate. It functions in the pathway metabolic intermediate biosynthesis; chorismate biosynthesis; chorismate from D-erythrose 4-phosphate and phosphoenolpyruvate: step 6/7. In terms of biological role, catalyzes the transfer of the enolpyruvyl moiety of phosphoenolpyruvate (PEP) to the 5-hydroxyl of shikimate-3-phosphate (S3P) to produce enolpyruvyl shikimate-3-phosphate and inorganic phosphate. The polypeptide is 3-phosphoshikimate 1-carboxyvinyltransferase (Photobacterium damsela subsp. piscicida (Pasteurella piscicida)).